The primary structure comprises 502 residues: Glycerol kinase (502 aa).

Thr14 is an ADP binding site. Positions 14, 15, and 16 each coordinate ATP. Thr14 contributes to the sn-glycerol 3-phosphate binding site. Position 18 (Arg18) interacts with ADP. 4 residues coordinate sn-glycerol 3-phosphate: Arg84, Glu85, Tyr136, and Asp246. The glycerol site is built by Arg84, Glu85, Tyr136, Asp246, and Gln247. Residues Thr268 and Gly311 each coordinate ADP. Positions 268, 311, 315, and 412 each coordinate ATP. Residues Gly412 and Asn416 each coordinate ADP.

The protein belongs to the FGGY kinase family. Homotetramer and homodimer (in equilibrium). Heterodimer with EIIA-Glc. Binds 1 zinc ion per glycerol kinase EIIA-Glc dimer. The zinc ion is important for dimerization.

It catalyses the reaction glycerol + ATP = sn-glycerol 3-phosphate + ADP + H(+). It participates in polyol metabolism; glycerol degradation via glycerol kinase pathway; sn-glycerol 3-phosphate from glycerol: step 1/1. With respect to regulation, activity of this regulatory enzyme is affected by several metabolites. Allosterically and non-competitively inhibited by fructose 1,6-bisphosphate (FBP) and unphosphorylated phosphocarrier protein EIIA-Glc (III-Glc), an integral component of the bacterial phosphotransferase (PTS) system. Functionally, key enzyme in the regulation of glycerol uptake and metabolism. Catalyzes the phosphorylation of glycerol to yield sn-glycerol 3-phosphate. The chain is Glycerol kinase from Salmonella agona (strain SL483).